Here is a 218-residue protein sequence, read N- to C-terminus: Testis expressed protein 56 (218 aa).

The polypeptide is Testis expressed protein 56 (Tex56) (Rattus norvegicus (Rat)).